The primary structure comprises 245 residues: uncharacterized protein (245 aa).

This is an uncharacterized protein from Acanthamoeba polyphaga (Amoeba).